A 230-amino-acid chain; its full sequence is NAD-dependent protein deacylase 1 (230 aa).

Positions 1-226 constitute a Deacetylase sirtuin-type domain; that stretch reads MESGIPTYRE…SHLSAFLSRE (226 aa). 2 residues coordinate substrate: tyrosine 41 and arginine 44. 75–78 is an NAD(+) binding site; that stretch reads QNID. Histidine 93 serves as the catalytic Proton acceptor. Cysteine 101, cysteine 104, cysteine 128, and cysteine 131 together coordinate Zn(2+). NAD(+)-binding positions include 168 to 170, 194 to 196, and alanine 212; these read GTS and NTV.

This sequence belongs to the sirtuin family. Class III subfamily. Zn(2+) serves as cofactor.

The protein localises to the cytoplasm. The enzyme catalyses N(6)-acetyl-L-lysyl-[protein] + NAD(+) + H2O = 2''-O-acetyl-ADP-D-ribose + nicotinamide + L-lysyl-[protein]. It catalyses the reaction N(6)-succinyl-L-lysyl-[protein] + NAD(+) + H2O = 2''-O-succinyl-ADP-D-ribose + nicotinamide + L-lysyl-[protein]. NAD-dependent lysine deacetylase and desuccinylase that specifically removes acetyl and succinyl groups on target proteins. Modulates the activities of several proteins which are inactive in their acylated form. The polypeptide is NAD-dependent protein deacylase 1 (Pseudomonas syringae pv. tomato (strain ATCC BAA-871 / DC3000)).